An 87-amino-acid chain; its full sequence is MSSRRSSRSSVSEEEINELISKLQSLLPSSRRRGANQASTTKLLKETCSYIKSLHREVDDLSDRLSDLMAGMDHNSPGAEIIRSLLR.

The bHLH domain maps to 1-54 (MSSRRSSRSSVSEEEINELISKLQSLLPSSRRRGANQASTTKLLKETCSYIKSL).

The protein belongs to the bHLH protein family. In terms of assembly, interacts with LO9-177. In terms of tissue distribution, expressed in phloem of leaf blades and sheaths, lamina joints, filaments before anthesis, vasculare bundles of the ovule, lemma and palea, and embryos.

It is found in the cytoplasm. In terms of biological role, atypical and probable non DNA-binding bHLH transcription factor that acts as a positive regulator of brassinosteroid (BR) response. Controls lamina inclination by participating in two BR signaling pathways involving BRI1 and RGA1. Involved in the RLI1-dependent modulation of leaf inclination by promoting lamina joint cell elongation, especially in response to phosphate (Pi) availability. This chain is Transcription factor ILI4 (ILI4), found in Oryza sativa subsp. japonica (Rice).